The sequence spans 1199 residues: Nucleolar protein 6 (1199 aa).

Residues 1-10 (MLRNKRKAGK) show a composition bias toward basic residues. Disordered stretches follow at residues 1–51 (MLRN…EPKP) and 1146–1199 (KREQ…KALK). 2 stretches are compositionally biased toward basic and acidic residues: residues 28-37 (HAEDHSDLEH) and 1146-1169 (KREQ…EKST).

Belongs to the NRAP family. As to quaternary structure, part of the small subunit (SSU) processome, composed of more than 70 proteins and the RNA chaperone small nucleolar RNA (snoRNA) U3.

It is found in the nucleus. Its subcellular location is the nucleolus. The protein resides in the chromosome. In terms of biological role, part of the small subunit (SSU) processome, first precursor of the small eukaryotic ribosomal subunit. During the assembly of the SSU processome in the nucleolus, many ribosome biogenesis factors, an RNA chaperone and ribosomal proteins associate with the nascent pre-rRNA and work in concert to generate RNA folding, modifications, rearrangements and cleavage as well as targeted degradation of pre-ribosomal RNA by the RNA exosome. In Drosophila yakuba (Fruit fly), this protein is Nucleolar protein 6.